Reading from the N-terminus, the 546-residue chain is Light-independent protochlorophyllide reductase subunit B (546 aa).

Asp-36 serves as a coordination point for [4Fe-4S] cluster. Asp-287 serves as the catalytic Proton donor. A substrate-binding site is contributed by 422–423 (GL). A disordered region spans residues 443–501 (PSHLSAHRPTGEAVGDAVGEPPAAPRDQAAPAATLDGSAAQSDPARTTPPGAPSWEDSA).

This sequence belongs to the ChlB/BchB/BchZ family. As to quaternary structure, protochlorophyllide reductase is composed of three subunits; BchL, BchN and BchB. Forms a heterotetramer of two BchB and two BchN subunits. [4Fe-4S] cluster is required as a cofactor.

It carries out the reaction chlorophyllide a + oxidized 2[4Fe-4S]-[ferredoxin] + 2 ADP + 2 phosphate = protochlorophyllide a + reduced 2[4Fe-4S]-[ferredoxin] + 2 ATP + 2 H2O. Its pathway is porphyrin-containing compound metabolism; bacteriochlorophyll biosynthesis (light-independent). Component of the dark-operative protochlorophyllide reductase (DPOR) that uses Mg-ATP and reduced ferredoxin to reduce ring D of protochlorophyllide (Pchlide) to form chlorophyllide a (Chlide). This reaction is light-independent. The NB-protein (BchN-BchB) is the catalytic component of the complex. This is Light-independent protochlorophyllide reductase subunit B from Rhodospirillum rubrum (strain ATCC 11170 / ATH 1.1.1 / DSM 467 / LMG 4362 / NCIMB 8255 / S1).